The primary structure comprises 215 residues: Uridine kinase (215 aa).

ATP is bound at residue 16–23 (GASASGKS).

This sequence belongs to the uridine kinase family.

It localises to the cytoplasm. The catalysed reaction is uridine + ATP = UMP + ADP + H(+). It catalyses the reaction cytidine + ATP = CMP + ADP + H(+). It functions in the pathway pyrimidine metabolism; CTP biosynthesis via salvage pathway; CTP from cytidine: step 1/3. The protein operates within pyrimidine metabolism; UMP biosynthesis via salvage pathway; UMP from uridine: step 1/1. The polypeptide is Uridine kinase (Aliivibrio fischeri (strain ATCC 700601 / ES114) (Vibrio fischeri)).